The primary structure comprises 1512 residues: Lysophospholipase NTE1 (1512 aa).

At 1–48 the chain is on the cytoplasmic side; it reads MAAPDAMTSLVKSSVALLSSAHESLPTSLAAMKTAETAPSSTFGILGR. A helical transmembrane segment spans residues 49-69; that stretch reads VILSILSVLPTLLFWVSYTLP. Residues 70–83 lie on the Lumenal side of the membrane; it reads TWLFTLFSMSLTFT. A helical membrane pass occupies residues 84 to 104; that stretch reads MNFTTLMLVLVFVVSTISYFV. Topologically, residues 105–1512 are cytoplasmic; sequence RYRYLTMYAR…RTMAPRRASI (1408 aa). 4 disordered regions span residues 204 to 230, 262 to 362, 534 to 556, and 740 to 770; these read NREE…QAHR, RHDE…AHPD, TQMS…QHDV, and TEDD…KRSR. Acidic residues predominate over residues 208–217; that stretch reads SDSDEDDGEL. Positions 268–291 are enriched in polar residues; that stretch reads GPSSSTPMSPQHRPSMTRNSSFNM. Over residues 343–358 the composition is skewed to basic residues; the sequence is HSKQRRSPSRSTKPKS. Positions 537–549 are enriched in low complexity; it reads SRGTGRSGRSSFS. A nucleoside 3',5'-cyclic phosphate contacts are provided by residues 669–793 and 830–950; these read LSAS…SNRS and RLTT…IASR. A compositionally biased stretch (polar residues) spans 751–761; sequence PTATNTSLRNG. Residues 1209–1373 enclose the PNPLA domain; that stretch reads LVLGGGGARG…IDNLTVAHMK (165 aa). A GXGXXG motif is present at residues 1213–1218; that stretch reads GGGARG. Residues 1240-1244 carry the GXSXG motif; it reads GTSIG. The active-site Nucleophile is the Ser-1242. The active-site Proton acceptor is Asp-1360. Residues 1360–1362 carry the DGA/G motif; it reads DGG.

It belongs to the NTE family.

The protein localises to the endoplasmic reticulum membrane. It carries out the reaction a 1-acyl-sn-glycero-3-phosphocholine + H2O = sn-glycerol 3-phosphocholine + a fatty acid + H(+). Its activity is regulated as follows. Inhibited by organophosphorus esters. Intracellular phospholipase B that catalyzes the double deacylation of phosphatidylcholine (PC) to glycerophosphocholine (GroPCho). Plays an important role in membrane lipid homeostasis. Responsible for the rapid PC turnover in response to inositol, elevated temperatures, or when choline is present in the growth medium. The chain is Lysophospholipase NTE1 (NTE1) from Phaeosphaeria nodorum (strain SN15 / ATCC MYA-4574 / FGSC 10173) (Glume blotch fungus).